We begin with the raw amino-acid sequence, 227 residues long: MMRAGGLLKLGVLVSVLFVAVFLAFELLESNMNFNLGKVFTRYAPPDAVPTRPLRHKCGLSKSCPEDHFAFKITSGAASVVGPKMCFQDNVIMSGVKNNIGRGINIALLNGKTGELTKTDSFDMWTGDVNLLIKFLKDIEDGSIVMMATFDDPATKMNDEARNLIADLGSSSISILGFRDNWVFVGGKGIKTKSPFEQHIKNNAETNKYEGWPEVLEMEGCIPIKHD.

Residues 1-30 (MMRAGGLLKLGVLVSVLFVAVFLAFELLES) form the signal peptide. 2 disulfide bridges follow: Cys-58-Cys-86 and Cys-64-Cys-221. One can recognise a GG-type lectin domain in the interval 67-225 (DHFAFKITSG…LEMEGCIPIK (159 aa)).

The protein belongs to the FAM3 family.

The protein localises to the secreted. Functionally, involved in retinal laminar formation. This chain is Protein FAM3C (fam3c), found in Danio rerio (Zebrafish).